We begin with the raw amino-acid sequence, 222 residues long: MAYDSDYTFPDPETSDKQGLLAIGGVLTPKRVLQAYSQGIFPWYEPGNPVLWWSPNPRLILIPNEFKISRSLKKTLKKPFKLTVDTAFQRVISYCATCSDRTNKTWITSEMIETYTQLHEMGYAHSFEIWDGSELVGGLYGISLGHAFFGESMFHTITDASKVALHFLCSIMQSWNFDFIDCQLPTLHLMRLGAKIISRKEFLHMLQETLKYPDKKGNWSVD.

Belongs to the L/F-transferase family.

It is found in the cytoplasm. The catalysed reaction is N-terminal L-lysyl-[protein] + L-leucyl-tRNA(Leu) = N-terminal L-leucyl-L-lysyl-[protein] + tRNA(Leu) + H(+). The enzyme catalyses N-terminal L-arginyl-[protein] + L-leucyl-tRNA(Leu) = N-terminal L-leucyl-L-arginyl-[protein] + tRNA(Leu) + H(+). It carries out the reaction L-phenylalanyl-tRNA(Phe) + an N-terminal L-alpha-aminoacyl-[protein] = an N-terminal L-phenylalanyl-L-alpha-aminoacyl-[protein] + tRNA(Phe). Its function is as follows. Functions in the N-end rule pathway of protein degradation where it conjugates Leu, Phe and, less efficiently, Met from aminoacyl-tRNAs to the N-termini of proteins containing an N-terminal arginine or lysine. In Legionella pneumophila (strain Paris), this protein is Leucyl/phenylalanyl-tRNA--protein transferase.